Reading from the N-terminus, the 861-residue chain is Probable beta-glucosidase A (861 aa).

The signal sequence occupies residues 1–19 (MKLGWIEVAALAAASVVSA). Residues asparagine 62, asparagine 212, and asparagine 253 are each glycosylated (N-linked (GlcNAc...) asparagine). The active site involves aspartate 281. N-linked (GlcNAc...) asparagine glycans are attached at residues asparagine 316, asparagine 323, asparagine 355, asparagine 443, asparagine 524, asparagine 543, asparagine 565, asparagine 669, and asparagine 713. The interval 730–754 (DSKYIPEGATDGSAQPRLPASGGAG) is disordered. Residue asparagine 846 is glycosylated (N-linked (GlcNAc...) asparagine).

This sequence belongs to the glycosyl hydrolase 3 family.

The protein localises to the secreted. The catalysed reaction is Hydrolysis of terminal, non-reducing beta-D-glucosyl residues with release of beta-D-glucose.. Its pathway is glycan metabolism; cellulose degradation. In terms of biological role, beta-glucosidases are one of a number of cellulolytic enzymes involved in the degradation of cellulosic biomass. Catalyzes the last step releasing glucose from the inhibitory cellobiose. This chain is Probable beta-glucosidase A (bglA), found in Aspergillus oryzae (strain ATCC 42149 / RIB 40) (Yellow koji mold).